We begin with the raw amino-acid sequence, 525 residues long: MAKNYWGFFLFCLALGLMLNLSQQASLFKRDFYTAGVVEFEPSNELSDNLAGYLEIIQSQNATSTDIIVFPESTLNSAGSTTFVPNPEDQINPCLSDPNATYYEEFLVTLSCAARNASKYIVINLTEKQKCEDIPEDTRPCASNGLNVFNTNVVFDRQGVVVSRYRKVHLYGEPKNSTFLPELSTFETDFGVTFGHFICFDILFYTPAHQLIVEQGITDFVYPAMWFSQLPFLTVNGIFSSKAVQIQLGWSYANNVNLLAAGASDPIVGNSGSGIYHGRSGSLRSVMRQESGERSIYVARVPKYRAKRRMKRDLKRQVATSSSFNIKRDYLENFTSEELKIDAGKIGNLSQNLCHGGFCCHFDLAWRSLGKPSRNTSHYSYRVGIYEGWRNEKRLDVNYIRNCGVFTCSGNSIDDCGQLLPDIQRPLVTFTHVEIRVTYPQSREFLLFPDTLLDNLLPLEPKQFEWSQKRISEESHQVRFALRKSLEVKHLLTFGIYGNYYNNECTFGVGTAEEQLECGYKNPKI.

The signal sequence occupies residues 1–27; it reads MAKNYWGFFLFCLALGLMLNLSQQASL. Residues asparagine 20 and asparagine 61 are each glycosylated (N-linked (GlcNAc...) asparagine). The 271-residue stretch at 33–303 folds into the CN hydrolase domain; sequence YTAGVVEFEP…RSIYVARVPK (271 aa). The active-site Proton acceptor is glutamate 72. N-linked (GlcNAc...) asparagine glycans are attached at residues asparagine 99, asparagine 116, and asparagine 124. The active-site Proton donor is the lysine 167. Asparagine 176 carries an N-linked (GlcNAc...) asparagine glycan. The Nucleophile role is filled by cysteine 199. N-linked (GlcNAc...) asparagine glycans are attached at residues asparagine 333, asparagine 348, and asparagine 375.

The protein belongs to the carbon-nitrogen hydrolase superfamily. BTD/VNN family. In terms of tissue distribution, expressed in third instar larvae.

It is found in the secreted. The protein is Vanin-like protein 2 of Drosophila melanogaster (Fruit fly).